A 183-amino-acid chain; its full sequence is Caspase recruitment domain-containing protein 19 (183 aa).

Cys-7 and Cys-77 are oxidised to a cystine. One can recognise a CARD domain in the interval 8–99 (DRLVQDTPFL…PLHSCLPSRH (92 aa)). The chain crosses the membrane as a helical span at residues 122–142 (GPVAFLTCLGLAAGLALLIYC).

Associates with BCL10 by CARD-CARD interaction.

The protein resides in the endoplasmic reticulum membrane. It is found in the mitochondrion membrane. In terms of biological role, plays a role in inhibiting the effects of BCL10-induced activation of NF-kappa-B. May inhibit the phosphorylation of BCL10 in a CARD-dependent manner. This chain is Caspase recruitment domain-containing protein 19 (CARD19), found in Bos taurus (Bovine).